The sequence spans 516 residues: Replication factor C large subunit (516 aa).

44-51 (GAPGVGKT) provides a ligand contact to ATP. The disordered stretch occupies residues 421-516 (RSEAVEAHAG…DGQAGLSEFM (96 aa)). Positions 454–467 (VQSHKSAESGDDTV) are enriched in basic and acidic residues. A compositionally biased stretch (low complexity) spans 479 to 496 (QSGASETASATESASDSD). Residues 497 to 508 (ASTDTDADDDDG) show a composition bias toward acidic residues.

This sequence belongs to the activator 1 small subunits family. RfcL subfamily. As to quaternary structure, heteromultimer composed of small subunits (RfcS) and large subunits (RfcL).

Functionally, part of the RFC clamp loader complex which loads the PCNA sliding clamp onto DNA. The protein is Replication factor C large subunit of Haloquadratum walsbyi (strain DSM 16790 / HBSQ001).